The following is an 809-amino-acid chain: MGVGRARLYFQYFKAKFLKRRVTPPVDYEEIVSEFWRADFSSTEHARWHAEAGDGYETARGAHGLTLHLRRKFLYAWSANPVFRYKDCVLTARIRFLPGTHPPGEARALPNSEQPEVPASLDSTSRPACLPEAVAVDPSAMGEAVPERAGTCAAGLLFRYLNESTFYALLVSDGGWLRLDAVVNNTPLPLLGWTDTGASDEVRVLSLIAVGTSFTLCVDDQWIAQIEDDTIQAAGKVCFAAQNWGVHAHRSFELSAFSLESQPFMVETACLRANEPARIPASAHLRLAESLYAMGRAACARAEMKKLKAKCTFGLREYLLAGDIACAQHLYDEAEEAFNAALVQDPHCMRALLALGGALYQQNAYEKLAHLLATHRVVAERDAFLSNLCGHLALAQNRHEDAAAAYQRAFRLDPHQGLFALHAAQELSLLGEKEQAIQAYLHAARLFLAQESYADLERVVLALRRLDPERTEVRSIAGKLYYATGRHRQAHTQFDALCRAGSADATVWYLYGLLLREAQGTHEHDAPAAAACEQRARDAFQRACALAPDCALYHFKYAESLFLSEKDCDEPLARALALDPDNGWLHNLCAQKALREQNFDAAAQSLQRARALLPHELVVLENYIELQRQRGALACCVPLFEVETQRADAAVIAQRGQAFHLLANAFYADGCYEHAAPWYDKALREEPQNVQMLVHKAENSIKLHLLHEADALLVKALDIQLTAHVYTLIALVAAQLGDFPRAELTLQEACTLWPQCTEVRIELIHLYLTMQDRQQAATQWNILVQKEDSDRVRALHALIFEEKPPAPQE.

The tract at residues 103-125 (PGEARALPNSEQPEVPASLDSTS) is disordered. 9 TPR repeats span residues 315–348 (LREY…DPHC), 383–416 (AFLS…DPHQ), 418–450 (LFAL…FLAQ), 471–504 (TEVR…GSAD), 513–550 (LLLR…APDC), 552–582 (LYHF…DPDN), 583–616 (GWLH…LPHE), 656–689 (GQAF…EPQN), and 723–756 (AHVY…WPQC).

The chain is TPR repeat-containing protein TP_0920 from Treponema pallidum (strain Nichols).